The chain runs to 328 residues: tRNA uridine(34) hydroxylase (328 aa).

Residues 130–224 enclose the Rhodanese domain; that stretch reads LDKDTVVLDT…YGKDPEVQGE (95 aa). The active-site Cysteine persulfide intermediate is the C184.

It belongs to the TrhO family.

It carries out the reaction uridine(34) in tRNA + AH2 + O2 = 5-hydroxyuridine(34) in tRNA + A + H2O. Catalyzes oxygen-dependent 5-hydroxyuridine (ho5U) modification at position 34 in tRNAs. The chain is tRNA uridine(34) hydroxylase from Streptococcus pneumoniae (strain Taiwan19F-14).